Here is a 343-residue protein sequence, read N- to C-terminus: Protease inhibitor Egf1.5a (343 aa).

A signal peptide spans 1-28; sequence MYIDTGIMSNNIFLFAFFALVGLTRIEA. Positions 52 to 104 constitute a TIL domain; that stretch reads CRENEHYNSTRIECEDECNDRNNKLCYRFQQFCWCNEGYIRNSSHICVKLEDC.

The protein belongs to the polydnaviridae EGF-like motif protein family. Interacts with host PAP1, PAP3 and SPH2.

Counteracts the host humoral immune response by inhibiting the processing and the amidolytic activity of host PAP1 and PAP3. Thereby, melanization of host hemolymph, normally producing several reactive intermediates toxic for viruses, is deregulated and proper immune response cannot occur. This chain is Protease inhibitor Egf1.5a (O1), found in Microplitis demolitor bracovirus (isolate Webb) (MdBV).